Here is a 1176-residue protein sequence, read N- to C-terminus: Serine/threonine-protein kinase pakF (1176 aa).

Low complexity-rich tracts occupy residues 1–19 and 32–52; these read MSNLKLSNNNNGNQKESSS and NLLNSFSSNNSNNNLSNSGSN. 2 disordered regions span residues 1 to 231 and 254 to 361; these read MSNL…HESR and LPST…KKTK. Over residues 64-76 the composition is skewed to pro residues; the sequence is QLPPNYTPPPPPH. A coiled-coil region spans residues 92 to 133; it reads LNNENSDNNNNNNNNNNNNNNNNNNNNNNNNNNNEQLARTES. 3 stretches are compositionally biased toward low complexity: residues 93–125, 133–148, and 156–172; these read NNENSDNNNNNNNNNNNNNNNNNNNNNNNNNNN, SSVSIISSSSSGSNSG, and SSNISTDDSNTTTETYS. Polar residues predominate over residues 173–197; sequence MSPNQTLNSNIDSSEQQHQDLSSSV. Positions 198–226 are enriched in low complexity; that stretch reads NNNNNNNNNNNNNNNNNNNNNNNNNNNNN. Polar residues predominate over residues 254-289; that stretch reads LPSTPTQQNVEIQTTNGGSSETSPNGLISPRPSNDQ. A compositionally biased stretch (low complexity) spans 316–353; the sequence is SLSSSTTTPSTTSSLTSSPSSSSLAISSPNTTAATTTN. The region spanning 370–383 is the CRIB domain; it reads ISVPYNVIHKMHVD. Residues 394 to 646 form the Protein kinase domain; that stretch reads FILDEKLGDG…PIDLLCHPFL (253 aa). Residues 400-408 and Lys-423 each bind ATP; that span reads LGDGAYGSV. The active-site Proton acceptor is the Asp-514. 4 disordered regions span residues 670 to 723, 753 to 885, 968 to 1083, and 1112 to 1176; these read IDDL…SDEL, QEEE…GNNL, HTTS…TGRA, and NSNS…NIKK. Composition is skewed to low complexity over residues 682–693 and 710–720; these read SQSSSSSSPQSP and SIISPIPSSPS. Composition is skewed to acidic residues over residues 767-789 and 813-844; these read DEQDDEQDDEDDDDENEDDEDVD and DQDDEEEDEEEDDEEEEEEEEDDDEINEDEEI. The stretch at 812 to 873 forms a coiled coil; it reads SDQDDEEEDE…NKKKNKKNNL (62 aa). Residues 852–870 are compositionally biased toward basic residues; it reads VRKKKNKSTKKSNKKKNKK. Composition is skewed to polar residues over residues 873–884 and 968–985; these read LSTIGKSGSGNN and HTTSQPKQMQSKLSATNL. Low complexity-rich tracts occupy residues 991–1044, 1051–1066, and 1148–1176; these read SSSP…RPNS, NNSSTTTTTNSNSSSS, and SSGSGSNSPSLSTNSSSTNSNNSVTNIKK.

The protein belongs to the protein kinase superfamily. STE Ser/Thr protein kinase family. STE20 subfamily. It depends on Mg(2+) as a cofactor.

It carries out the reaction L-seryl-[protein] + ATP = O-phospho-L-seryl-[protein] + ADP + H(+). It catalyses the reaction L-threonyl-[protein] + ATP = O-phospho-L-threonyl-[protein] + ADP + H(+). This chain is Serine/threonine-protein kinase pakF, found in Dictyostelium discoideum (Social amoeba).